A 303-amino-acid chain; its full sequence is Exosome complex component RRP4 homolog (303 aa).

The KH domain maps to 175-213; the sequence is GILIKVPPHLIKKSKKHFHTLPYGMAVIIGCNGSVWVTP.

Belongs to the RRP4 family. In terms of assembly, component of the RNA exosome complex. Ubiquitously expressed.

The protein localises to the nucleus. It is found in the nucleolus. The protein resides in the nucleoplasm. In terms of biological role, non-catalytic component of the RNA exosome complex which has 3'-&gt;5' exoribonuclease activity and participates in a multitude of cellular RNA processing and degradation events. Involved in regulation of antisense ribosomal siRNA production. Involved in response to cold-warm shock. In Caenorhabditis elegans, this protein is Exosome complex component RRP4 homolog.